A 94-amino-acid chain; its full sequence is Large ribosomal subunit protein bL28 (94 aa).

The protein belongs to the bacterial ribosomal protein bL28 family.

This is Large ribosomal subunit protein bL28 from Maricaulis maris (strain MCS10) (Caulobacter maris).